Here is a 454-residue protein sequence, read N- to C-terminus: Cytochrome b-c1 complex subunit 2, mitochondrial (454 aa).

The transit peptide at 1–35 directs the protein to the mitochondrion; that stretch reads MISRSALSRGSQLALRRPAAAKTAQRGFAAAAASP.

This sequence belongs to the peptidase M16 family. UQCRC2/QCR2 subfamily. In terms of assembly, component of the ubiquinol-cytochrome c oxidoreductase (cytochrome b-c1 complex, complex III, CIII), a multisubunit enzyme composed of 10 subunits. The complex is composed of 3 respiratory subunits cytochrome b (cob), cytochrome c1 (cyt-1) and Rieske protein (fes-1), 2 core protein subunits pep and ucr-1, and 5 low-molecular weight protein subunits qcr6, qcr7, qcr8, qcr9 and probably NCU16844/qcr10. The complex exists as an obligatory dimer and forms supercomplexes (SCs) in the inner mitochondrial membrane with NADH-ubiquinone oxidoreductase (complex I, CI) and cytochrome c oxidase (complex IV, CIV), resulting in different assemblies (supercomplexes SCI(1)III(2), SCIII(2)IV(1) and SCIII(2)IV(2) as well as higher order I(x)III(y)IV(z) megacomplexes).

The protein localises to the mitochondrion inner membrane. Component of the ubiquinol-cytochrome c oxidoreductase, a multisubunit transmembrane complex that is part of the mitochondrial electron transport chain which drives oxidative phosphorylation. The respiratory chain contains 3 multisubunit complexes succinate dehydrogenase (complex II, CII), ubiquinol-cytochrome c oxidoreductase (cytochrome b-c1 complex, complex III, CIII) and cytochrome c oxidase (complex IV, CIV), that cooperate to transfer electrons derived from NADH and succinate to molecular oxygen, creating an electrochemical gradient over the inner membrane that drives transmembrane transport and the ATP synthase. The cytochrome b-c1 complex catalyzes electron transfer from ubiquinol to cytochrome c, linking this redox reaction to translocation of protons across the mitochondrial inner membrane, with protons being carried across the membrane as hydrogens on the quinol. In the process called Q cycle, 2 protons are consumed from the matrix, 4 protons are released into the intermembrane space and 2 electrons are passed to cytochrome c. In Neurospora crassa (strain ATCC 24698 / 74-OR23-1A / CBS 708.71 / DSM 1257 / FGSC 987), this protein is Cytochrome b-c1 complex subunit 2, mitochondrial (ucr-1).